The sequence spans 243 residues: 1-(5-phosphoribosyl)-5-[(5-phosphoribosylamino)methylideneamino] imidazole-4-carboxamide isomerase (243 aa).

Aspartate 10 serves as the catalytic Proton acceptor. The active-site Proton donor is aspartate 128.

The protein belongs to the HisA/HisF family.

The protein resides in the cytoplasm. The catalysed reaction is 1-(5-phospho-beta-D-ribosyl)-5-[(5-phospho-beta-D-ribosylamino)methylideneamino]imidazole-4-carboxamide = 5-[(5-phospho-1-deoxy-D-ribulos-1-ylimino)methylamino]-1-(5-phospho-beta-D-ribosyl)imidazole-4-carboxamide. It functions in the pathway amino-acid biosynthesis; L-histidine biosynthesis; L-histidine from 5-phospho-alpha-D-ribose 1-diphosphate: step 4/9. The polypeptide is 1-(5-phosphoribosyl)-5-[(5-phosphoribosylamino)methylideneamino] imidazole-4-carboxamide isomerase (Helicobacter hepaticus (strain ATCC 51449 / 3B1)).